The chain runs to 504 residues: Probable cytochrome P450 6a21 (504 aa).

Residue Cys-449 participates in heme binding.

Belongs to the cytochrome P450 family. Heme serves as cofactor.

It localises to the endoplasmic reticulum membrane. The protein localises to the microsome membrane. Its function is as follows. May be involved in the metabolism of insect hormones and in the breakdown of synthetic insecticides. This is Probable cytochrome P450 6a21 (Cyp6a21) from Drosophila melanogaster (Fruit fly).